A 521-amino-acid chain; its full sequence is Cytochrome P450 1A1 (521 aa).

Phe-229 contacts substrate. Residue Cys-463 coordinates heme.

The protein belongs to the cytochrome P450 family. The cofactor is heme.

It localises to the endoplasmic reticulum membrane. The protein resides in the microsome membrane. It catalyses the reaction an organic molecule + reduced [NADPH--hemoprotein reductase] + O2 = an alcohol + oxidized [NADPH--hemoprotein reductase] + H2O + H(+). Its function is as follows. Cytochromes P450 are a group of heme-thiolate monooxygenases. They oxidize a variety of structurally unrelated compounds, including steroids, fatty acids, and xenobiotics. The sequence is that of Cytochrome P450 1A1 (cyp1a1) from Platichthys flesus (European flounder).